Here is a 229-residue protein sequence, read N- to C-terminus: Enolase-phosphatase E1 (229 aa).

It belongs to the HAD-like hydrolase superfamily. MasA/MtnC family. In terms of assembly, monomer. The cofactor is Mg(2+).

The catalysed reaction is 5-methylsulfanyl-2,3-dioxopentyl phosphate + H2O = 1,2-dihydroxy-5-(methylsulfanyl)pent-1-en-3-one + phosphate. The protein operates within amino-acid biosynthesis; L-methionine biosynthesis via salvage pathway; L-methionine from S-methyl-5-thio-alpha-D-ribose 1-phosphate: step 3/6. Its pathway is amino-acid biosynthesis; L-methionine biosynthesis via salvage pathway; L-methionine from S-methyl-5-thio-alpha-D-ribose 1-phosphate: step 4/6. Its function is as follows. Bifunctional enzyme that catalyzes the enolization of 2,3-diketo-5-methylthiopentyl-1-phosphate (DK-MTP-1-P) into the intermediate 2-hydroxy-3-keto-5-methylthiopentenyl-1-phosphate (HK-MTPenyl-1-P), which is then dephosphorylated to form the acireductone 1,2-dihydroxy-3-keto-5-methylthiopentene (DHK-MTPene). In Yersinia enterocolitica serotype O:8 / biotype 1B (strain NCTC 13174 / 8081), this protein is Enolase-phosphatase E1.